Reading from the N-terminus, the 408-residue chain is Putative gustatory receptor 98c (408 aa).

Over 1–42 (MEMEAKRSRLLTTARPYLQVLSLFGLTPPAEFFTRTLRKRRR) the chain is Cytoplasmic. Residues 43–63 (FCWMAGYSLYLIAILLMVFYE) form a helical membrane-spanning segment. Over 64–92 (FHANIVSLHLEIYKFHVEDFSKVMGRTQK) the chain is Extracellular. The helical transmembrane segment at 93–113 (FLIVAIATCNQLNILLNYGRL) threads the bilayer. The Cytoplasmic segment spans residues 114–146 (GLIYDEIANLDLGIDKSSKNFCGKSHWWSFRLR). A helical membrane pass occupies residues 147-167 (LTLSIGLWMVIIIGVIPRLTL). Topologically, residues 168–183 (GRAGPFFHWVNQVLTQ) are extracellular. Residues 184 to 204 (IILIMLQLKGPEYCLFVLLVY) form a helical membrane-spanning segment. Residues 205–261 (ELILRTRHVLEQLKDDLEDFDCGARIQELCVTLKQNQLLIGRIWRLVDEIGAYFRWS) are Cytoplasmic-facing. Residues 262 to 282 (MTLLFLYNGLTILHVVNWAII) traverse the membrane as a helical segment. Residues 283-296 (RSIDPNDCCQLNRL) are Extracellular-facing. A helical membrane pass occupies residues 297-317 (GSITFLSFNLLLTCFFSECCV). The Cytoplasmic portion of the chain corresponds to 318–367 (KTYNSISYILHQIGCLPTAEEFQMLKMGLKEYILQMQHLKLLFTCGGLFD). Residues 368 to 388 (INIKLFGGMLVTLCGYVIIIV) form a helical membrane-spanning segment. At 389-408 (QFKIQDFALIGYRQNTSDTS) the chain is on the extracellular side. N-linked (GlcNAc...) asparagine glycosylation is present at Asn-403.

Belongs to the insect chemoreceptor superfamily. Gustatory receptor (GR) family. Gr2a subfamily.

It localises to the cell membrane. In terms of biological role, probable gustatory receptor which mediates acceptance or avoidance behavior, depending on its substrates. The chain is Putative gustatory receptor 98c (Gr98c) from Drosophila melanogaster (Fruit fly).